Here is an 88-residue protein sequence, read N- to C-terminus: Co-chaperonin GroES (88 aa).

This sequence belongs to the GroES chaperonin family. Heptamer of 7 subunits arranged in a ring. Interacts with the chaperonin GroEL.

It localises to the cytoplasm. In terms of biological role, together with the chaperonin GroEL, plays an essential role in assisting protein folding. The GroEL-GroES system forms a nano-cage that allows encapsulation of the non-native substrate proteins and provides a physical environment optimized to promote and accelerate protein folding. GroES binds to the apical surface of the GroEL ring, thereby capping the opening of the GroEL channel. In Thermodesulfovibrio yellowstonii (strain ATCC 51303 / DSM 11347 / YP87), this protein is Co-chaperonin GroES.